Reading from the N-terminus, the 58-residue chain is MSEIKVGENESLESALRRFKRKCARAGVLSEVRKREHYEKPSVKRKKKSEAARKRKFK.

The segment at 34 to 58 (KREHYEKPSVKRKKKSEAARKRKFK) is disordered. Basic residues predominate over residues 43–58 (VKRKKKSEAARKRKFK).

This sequence belongs to the bacterial ribosomal protein bS21 family.

In Clostridium acetobutylicum (strain ATCC 824 / DSM 792 / JCM 1419 / IAM 19013 / LMG 5710 / NBRC 13948 / NRRL B-527 / VKM B-1787 / 2291 / W), this protein is Small ribosomal subunit protein bS21.